A 209-amino-acid polypeptide reads, in one-letter code: MTGSSPNILILGIGNLLWADEGFGVRCVELLNERYRFPDGVRLMDGGTQGIYLVQHVQQADCLIVFDAVDYGLAPGTLKVVRDDEVPRFMGAKRMSLHQTGFQDVLALAAFTGAYPRELLLVGVQPAELEDFGGSLREPVRAQLEPALAIALAFLAERGVLATPREGDAEQLAPAQLALGRYEAERPAEELAYRHGDIRFIAQPGREDD.

Positions 21, 67, and 98 each coordinate Ni(2+).

The protein belongs to the peptidase A31 family.

Its function is as follows. Not known. Could be involved in the processing of hydrogenase. This chain is Hydrogenase expression/formation protein HupM (hupM), found in Azotobacter chroococcum mcd 1.